A 603-amino-acid chain; its full sequence is MSFVIAAPETLVRAASDLANIGSTLGAANAAALGPTTELLAAGADEVSAAIASLFAAHGQAYQAVSAQMSAFHAQFVQTFTAGAGAYASAEAAAAAPLEGLLNIVNTPTQLLLGRPLIGNGANGAPGTGQAGGAGGLLYGNGGAGGSGAPGQAGGPGGAAGLFGNGGAGGAGGDGPGNGAAGGAGGAGGLLFGSGGAGGPGGVGNTGTGGLGGDGGAAGLFGAGGIGGAGGPGFNGGAGGAGGRSGLFEVLAAGGAGGTGGLSVNGGTGGTGGTGGGGGLFSNGGAGGAGGFGVSGSAGGNGGTGGDGGIFTGNGGTGGTGGTGTGNQLVGGEGGAGGAGGNAGILFGAGGIGGTGGTGLGAPDPGGTGGKGGVGGIGGAGALFGPGGAGGTGGFGASSADQMAGGIGGSGGSGGAAKLIGDGGAGGTGGDSVRGAAGSGGTGGTGGLIGDGGAGGAGGTGIEFGSVGGAGGAGGNAAGLSGAGGAGGAGGFGETAGDGGAGGNAGLLNGDGGAGGAGGLGIAGDGGNGGKGGKAGMVGNGGDGGAGGASVVANGGVGGSGGNATLIGNGGNGGNGGVGSAPGKGGAGGTAGLLGLNGSPGLS.

A PE domain is found at 1-93; the sequence is MSFVIAAPET…AGAYASAEAA (93 aa).

Belongs to the mycobacterial PE family. PGRS subfamily.

This is an uncharacterized protein from Mycobacterium tuberculosis (strain ATCC 25618 / H37Rv).